The following is a 737-amino-acid chain: Autophagy-related protein 22 (737 aa).

Positions 115 to 154 (RMSPANAGDNSDSYPYGDDTDGDSSSGLPPPRYPGDDTRP) are disordered. Low complexity predominate over residues 125 to 141 (SDSYPYGDDTDGDSSSG). 4 helical membrane-spanning segments follow: residues 166-186 (YAFAAEVYVICGIGSFIPILL), 232-252 (SFAMYTFSVSVLLQALLVVSI), 264-284 (KLLLAFAWIGSACVMAYIFIS), and 289-309 (LIGALLAIISNTSFGASFVLL). The disordered stretch occupies residues 327 to 353 (GDYGSPGYATTEEGDDEDDEYQEDSTR). Residues 338–349 (EEGDDEDDEYQE) are compositionally biased toward acidic residues. Asn-354 carries an N-linked (GlcNAc...) asparagine glycan. The helical transmembrane segment at 395–415 (GIGIGYIAGLFLQCVAIAILI) threads the bilayer. A glycan (N-linked (GlcNAc...) asparagine) is linked at Asn-419. Helical transmembrane passes span 426-446 (IVLCVIGAWWAIFTIPAAMWL), 487-507 (LVDIVLFLAGWFLLSDAIATT), 524-544 (WALGMINVISTASGILGAFSW), 559-579 (ILACIALFELIPLYGLMGYLP), 593-613 (WEMYPLAAIYGFVLGGLSGYC), 632-652 (LYAITDKGSSVFGPAIVGAII), and 661-681 (AFWFLAAIVGTPALFIWFINV).

Belongs to the ATG22 family.

The protein resides in the vacuole membrane. Vacuolar effluxer which mediate the efflux of amino acids resulting from autophagic degradation. The release of autophagic amino acids allows the maintenance of protein synthesis and viability during nitrogen starvation. The polypeptide is Autophagy-related protein 22 (apg-11) (Neurospora crassa (strain ATCC 24698 / 74-OR23-1A / CBS 708.71 / DSM 1257 / FGSC 987)).